We begin with the raw amino-acid sequence, 219 residues long: 2-C-methyl-D-erythritol 4-phosphate cytidylyltransferase (219 aa).

The protein belongs to the IspD/TarI cytidylyltransferase family. IspD subfamily.

It catalyses the reaction 2-C-methyl-D-erythritol 4-phosphate + CTP + H(+) = 4-CDP-2-C-methyl-D-erythritol + diphosphate. It functions in the pathway isoprenoid biosynthesis; isopentenyl diphosphate biosynthesis via DXP pathway; isopentenyl diphosphate from 1-deoxy-D-xylulose 5-phosphate: step 2/6. Functionally, catalyzes the formation of 4-diphosphocytidyl-2-C-methyl-D-erythritol from CTP and 2-C-methyl-D-erythritol 4-phosphate (MEP). The protein is 2-C-methyl-D-erythritol 4-phosphate cytidylyltransferase of Chlamydia trachomatis serovar L2 (strain ATCC VR-902B / DSM 19102 / 434/Bu).